The following is a 564-amino-acid chain: MEKHAEPEKSLGDKEFQEKELHEKPAPAASEDISGDSSVNKEDGPDPINDNYLSGLRLAVVMFALCISNFLVALDTTILATAVPKISSDFNSLQDVGWYTSSYLLTNCAFQLFYGKLYTRFKVKIVFTVAMIIFEIGSLLCGVAPNSPVFIFGRAIAGLGSAGAFSGALIIVIHSVQAEKRAQYSGMIVGMYGLASVAAPLIGGAFTDHVTWRWCFYINLPCGGVAIAGLLFFFHSPPQAAVKETAAGLWAKIAKFDPFGTFFFLCSMICLLLALQMGGSTYPFTDARIIVLLVLFGLLLVAFIVVQFFDKNATIPPRVMKNRSVAFGMIYMFCVGAQFLVLVTFMPIWFQGVRAMSATDSGIRSLPILLSNTFCVVLAGALVSMTGYYIPFMWASVVLTSIGAGLLTTLTVDASTGKWVGYQIIAGIGGGLGYQQGISVAQTVLKGSDMTIGTAVMVFVQLLGGTILVSAANNILVTRLVENLERLAPHINPEIILRAGASGIKTAVSEADYPFVIEAYNIALTKTFQIALIVSCLGAIGAAGVEWKRGSKKGDSDEPAIMAV.

Positions 1–25 are enriched in basic and acidic residues; sequence MEKHAEPEKSLGDKEFQEKELHEKP. Residues 1–46 are disordered; that stretch reads MEKHAEPEKSLGDKEFQEKELHEKPAPAASEDISGDSSVNKEDGPD. The next 8 helical transmembrane spans lie at 58–78, 96–118, 125–145, 156–176, 186–206, 214–234, 259–279, and 289–309; these read LAVVMFALCISNFLVALDTTI, VGWYTSSYLLTNCAFQLFYGKLY, IVFTVAMIIFEIGSLLCGVAP, IAGLGSAGAFSGALIIVIHSV, GMIVGMYGLASVAAPLIGGAF, WCFYINLPCGGVAIAGLLFFF, FGTFFFLCSMICLLLALQMGG, and IIVLLVLFGLLLVAFIVVQFF. N312 and N322 each carry an N-linked (GlcNAc...) asparagine glycan. Helical transmembrane passes span 330–350, 361–383, 395–415, and 452–472; these read IYMFCVGAQFLVLVTFMPIWF, SGIRSLPILLSNTFCVVLAGALV, ASVVLTSIGAGLLTTLTVDAS, and IGTAVMVFVQLLGGTILVSAA.

Belongs to the major facilitator superfamily. TCR/Tet family.

It localises to the cell membrane. Efflux pump that might be required for efficient secretion of hypothemycin or other secondary metabolies produced by the hypothemycin gene cluster. This Hypomyces subiculosus (Nectria subiculosa) protein is Efflux pump hmp6.